The chain runs to 140 residues: Seminal plasma protein A3 (140 aa).

The first 25 residues, 1–25, serve as a signal peptide directing secretion; the sequence is MALRLGLFLIWAGVSMFLQLDPVNG. Fibronectin type-II domains lie at 49–93 and 94–140; these read TKDN…YCTK and NDYA…WKYC. 4 disulfide bridges follow: Cys-54–Cys-78, Cys-68–Cys-91, Cys-99–Cys-125, and Cys-113–Cys-140.

Belongs to the seminal plasma protein family.

The protein resides in the secreted. Functionally, the BSP-A proteins from seminal plasma exhibit both simulatory and inhibitory actions on the release of pituitary gonadotropins. The exact function of these proteins is not known. This Bos taurus (Bovine) protein is Seminal plasma protein A3.